The chain runs to 156 residues: Small ribosomal subunit protein uS7 (156 aa).

The protein belongs to the universal ribosomal protein uS7 family. Part of the 30S ribosomal subunit. Contacts proteins S9 and S11.

One of the primary rRNA binding proteins, it binds directly to 16S rRNA where it nucleates assembly of the head domain of the 30S subunit. Is located at the subunit interface close to the decoding center, probably blocks exit of the E-site tRNA. The polypeptide is Small ribosomal subunit protein uS7 (Brevibacillus brevis (strain 47 / JCM 6285 / NBRC 100599)).